A 307-amino-acid polypeptide reads, in one-letter code: Porphobilinogen deaminase (307 aa).

The residue at position 239 (Cys239) is an S-(dipyrrolylmethanemethyl)cysteine.

This sequence belongs to the HMBS family. Monomer. Requires dipyrromethane as cofactor.

It carries out the reaction 4 porphobilinogen + H2O = hydroxymethylbilane + 4 NH4(+). Its pathway is porphyrin-containing compound metabolism; protoporphyrin-IX biosynthesis; coproporphyrinogen-III from 5-aminolevulinate: step 2/4. In terms of biological role, tetrapolymerization of the monopyrrole PBG into the hydroxymethylbilane pre-uroporphyrinogen in several discrete steps. The chain is Porphobilinogen deaminase from Campylobacter jejuni subsp. jejuni serotype O:6 (strain 81116 / NCTC 11828).